We begin with the raw amino-acid sequence, 244 residues long: Phosphoadenosine 5'-phosphosulfate reductase (244 aa).

C239 (nucleophile; cysteine thiosulfonate intermediate) is an active-site residue.

This sequence belongs to the PAPS reductase family. CysH subfamily.

The protein localises to the cytoplasm. It carries out the reaction [thioredoxin]-disulfide + sulfite + adenosine 3',5'-bisphosphate + 2 H(+) = [thioredoxin]-dithiol + 3'-phosphoadenylyl sulfate. The protein operates within sulfur metabolism; hydrogen sulfide biosynthesis; sulfite from sulfate: step 3/3. In terms of biological role, catalyzes the formation of sulfite from phosphoadenosine 5'-phosphosulfate (PAPS) using thioredoxin as an electron donor. In Pectobacterium atrosepticum (strain SCRI 1043 / ATCC BAA-672) (Erwinia carotovora subsp. atroseptica), this protein is Phosphoadenosine 5'-phosphosulfate reductase.